A 436-amino-acid polypeptide reads, in one-letter code: Glutamyl-tRNA(Gln) amidotransferase subunit D (436 aa).

The Asparaginase/glutaminase domain occupies 91–420 (QNISIISTGG…GEVAKLMNKN (330 aa)). Catalysis depends on residues T101, T177, D178, and K254.

The protein belongs to the asparaginase 1 family. GatD subfamily. In terms of assembly, heterodimer of GatD and GatE.

The catalysed reaction is L-glutamyl-tRNA(Gln) + L-glutamine + ATP + H2O = L-glutaminyl-tRNA(Gln) + L-glutamate + ADP + phosphate + H(+). Allows the formation of correctly charged Gln-tRNA(Gln) through the transamidation of misacylated Glu-tRNA(Gln) in organisms which lack glutaminyl-tRNA synthetase. The reaction takes place in the presence of glutamine and ATP through an activated gamma-phospho-Glu-tRNA(Gln). The GatDE system is specific for glutamate and does not act on aspartate. The sequence is that of Glutamyl-tRNA(Gln) amidotransferase subunit D from Methanobrevibacter smithii (strain ATCC 35061 / DSM 861 / OCM 144 / PS).